We begin with the raw amino-acid sequence, 556 residues long: Formate--tetrahydrofolate ligase 2 (556 aa).

Residue 65-72 (TPAGEGKS) coordinates ATP.

This sequence belongs to the formate--tetrahydrofolate ligase family.

It catalyses the reaction (6S)-5,6,7,8-tetrahydrofolate + formate + ATP = (6R)-10-formyltetrahydrofolate + ADP + phosphate. The protein operates within one-carbon metabolism; tetrahydrofolate interconversion. This Streptococcus sanguinis (strain SK36) protein is Formate--tetrahydrofolate ligase 2.